Here is a 703-residue protein sequence, read N- to C-terminus: Polyribonucleotide nucleotidyltransferase (703 aa).

Mg(2+) is bound by residues D487 and D493. The KH domain maps to 554 to 613 (PKMETIKIDPDKIRDVIGKGGATIRSICEDTGASIDIDDNGTVRIYAESKLAADEAIYRI). In terms of domain architecture, S1 motif spans 623–691 (GKLYRGKVER…ARGRIKLSMK (69 aa)).

The protein belongs to the polyribonucleotide nucleotidyltransferase family. Component of the RNA degradosome, which is a multiprotein complex involved in RNA processing and mRNA degradation. It depends on Mg(2+) as a cofactor.

Its subcellular location is the cytoplasm. The enzyme catalyses RNA(n+1) + phosphate = RNA(n) + a ribonucleoside 5'-diphosphate. In terms of biological role, involved in mRNA degradation. Catalyzes the phosphorolysis of single-stranded polyribonucleotides processively in the 3'- to 5'-direction. In Hahella chejuensis (strain KCTC 2396), this protein is Polyribonucleotide nucleotidyltransferase.